Here is a 708-residue protein sequence, read N- to C-terminus: Alpha-galactosidase (708 aa).

The active-site Nucleophile is aspartate 441. The active-site Proton donor is the aspartate 505.

It belongs to the glycosyl hydrolase 36 family. In terms of assembly, homotetramer.

It catalyses the reaction Hydrolysis of terminal, non-reducing alpha-D-galactose residues in alpha-D-galactosides, including galactose oligosaccharides, galactomannans and galactolipids.. The sequence is that of Alpha-galactosidase (rafA) from Escherichia coli.